The chain runs to 597 residues: ATP-dependent lipid A-core flippase (597 aa).

The next 6 membrane-spanning stretches (helical) occupy residues 26 to 46, 65 to 85, 144 to 164, 166 to 186, 250 to 270, and 276 to 296; these read WIFA…TGLA, IQII…ANFI, ILTI…MAYL, GLLT…IWWV, AISQ…VIHL, and MLAQ…MLLL. Residues 29–311 form the ABC transmembrane type-1 domain; that stretch reads AASIITMAIY…LTKINGTLQR (283 aa). Positions 343 to 579 constitute an ABC transporter domain; it reads IRFEHLSFCY…ESHYAGLYRL (237 aa). Residue 377 to 384 coordinates ATP; it reads GHSGSGKS.

The protein belongs to the ABC transporter superfamily. Lipid exporter (TC 3.A.1.106) family. Homodimer.

It is found in the cell inner membrane. The catalysed reaction is ATP + H2O + lipid A-core oligosaccharideSide 1 = ADP + phosphate + lipid A-core oligosaccharideSide 2.. Involved in lipopolysaccharide (LPS) biosynthesis. Translocates lipid A-core from the inner to the outer leaflet of the inner membrane. Transmembrane domains (TMD) form a pore in the inner membrane and the ATP-binding domain (NBD) is responsible for energy generation. In Nitrosococcus oceani (strain ATCC 19707 / BCRC 17464 / JCM 30415 / NCIMB 11848 / C-107), this protein is ATP-dependent lipid A-core flippase.